A 235-amino-acid polypeptide reads, in one-letter code: uncharacterized protein (235 aa).

3 consecutive transmembrane segments (helical) span residues 41–61 (IFWHPLYLAVFGLVFMGIYRL), 71–91 (LRTFVLLILVSAVFLTLIEFP), and 129–149 (IGIIGILPANAPGAYQNTPTI).

Its subcellular location is the membrane. This is an uncharacterized protein from Schizosaccharomyces pombe (strain 972 / ATCC 24843) (Fission yeast).